The following is a 3114-amino-acid chain: Centromere protein F (3114 aa).

The segment at 1-481 (MSWALEEWKE…IKENELRRSM (481 aa)) is interaction with SNAP25 and required for localization to the cytoplasm. Positions 13-131 (PTRALQKIQE…KSELERSQQA (119 aa)) form a coiled coil. Serine 106 carries the phosphoserine modification. A phosphothreonine mark is found at threonine 144, threonine 151, and threonine 154. Tyrosine 158 is subject to Phosphotyrosine. Polar residues predominate over residues 211–235 (QASSSVFSWQQEKTPSHLSSNSQRT). Residues 211–236 (QASSSVFSWQQEKTPSHLSSNSQRTP) are disordered. Phosphoserine occurs at positions 242 and 276. Residues 280–685 (LDQLKAQNQE…SVEIRNLHNV (406 aa)) adopt a coiled-coil conformation. Phosphoserine is present on residues serine 773, serine 783, serine 821, serine 834, serine 838, and serine 876. Coiled coils occupy residues 899–989 (VAET…LNQE) and 1196–1244 (LEVK…IRGD). Serine 1248, serine 1255, and serine 1259 each carry phosphoserine. Positions 1549 to 1646 (VEELESLCEV…ELEVARLQLQ (98 aa)) form a coiled coil. Phosphoserine is present on residues serine 1651, serine 1652, and serine 1654. Disordered stretches follow at residues 1667–1690 (RNESCDISKEHTSETTERTPKHDV) and 1710–1746 (TETGAVKPTGECSGEQSPDTNYEPPGEDKTQGSSECI). The span at 1669-1690 (ESCDISKEHTSETTERTPKHDV) shows a compositional bias: basic and acidic residues. The residue at position 1726 (serine 1726) is a Phosphoserine. Threonine 1862 is subject to Phosphothreonine. Phosphoserine occurs at positions 1868 and 1892. 2 coiled-coil regions span residues 1890 to 2078 (NDSW…LQAR) and 2107 to 2891 (LSST…LCSQ). Positions 2026-2351 (LLKDKTHLQE…ERELEIARTN (326 aa)) are interaction with NDE1 and NDEL1. Repeat copies occupy residues 2111-2290 (QEEV…QSLD) and 2293-2472 (IEEE…QNLS). The segment at 2111–2472 (QEEVHQLRRG…ACKAKEQNLS (362 aa)) is 2 X 177 AA tandem repeats. Residues 2392 to 2829 (SEKENLTNEL…QAAQEKQKTG (438 aa)) form a sufficient for self-association region. The interval 2392–3017 (SEKENLTNEL…ATRTSPRLAA (626 aa)) is sufficient for centromere localization. Residues serine 2416 and serine 2417 each carry the phosphoserine modification. Lysine 2779 carries the N6-acetyllysine modification. Residues 2831 to 3017 (VMDTKVDELT…ATRTSPRLAA (187 aa)) are sufficient for nuclear localization. Residues 2891–2977 (QQSKQDSRGS…AEDTEGTEFE (87 aa)) form a disordered region. A phosphoserine mark is found at serine 2900, serine 2911, serine 2922, and serine 2936. The Nuclear localization signal signature appears at 2919 to 2936 (KRLSSGQNKASGKRQRSS). Threonine 2949 carries the post-translational modification Phosphothreonine. Residues serine 2952, serine 2998, serine 3023, and serine 3026 each carry the phosphoserine modification. The tract at residues 3024-3114 (PLSLGKENLA…SNGSENCKVQ (91 aa)) is disordered. Residues 3033–3045 (AESSKPTAGGSRS) are compositionally biased toward polar residues. A phosphoserine mark is found at serine 3054, serine 3079, and serine 3083. The span at 3079-3089 (SPTDSPREGLR) shows a compositional bias: basic and acidic residues. Residues 3105–3114 (SNGSENCKVQ) show a composition bias toward polar residues. At cysteine 3111 the chain carries Cysteine methyl ester. Residue cysteine 3111 is the site of S-farnesyl cysteine attachment. The propeptide at 3112–3114 (KVQ) is removed in mature form.

This sequence belongs to the centromere protein F family. Interacts with and STX4 (via C-terminus). Interacts (via N-terminus) with RBL1, RBL2 and SNAP25. Self-associates. Interacts with CENP-E and BUBR1 (via C-terminus). Interacts (via C-terminus) with NDE1, NDEL1 and RB1. In terms of processing, hyperphosphorylated during mitosis.

Its subcellular location is the cytoplasm. The protein localises to the perinuclear region. The protein resides in the nucleus matrix. It is found in the chromosome. It localises to the centromere. Its subcellular location is the kinetochore. The protein localises to the cytoskeleton. The protein resides in the spindle. In terms of biological role, required for kinetochore function and chromosome segregation in mitosis. Required for kinetochore localization of dynein, LIS1, NDE1 and NDEL1. Regulates recycling of the plasma membrane by acting as a link between recycling vesicles and the microtubule network though its association with STX4 and SNAP25. Acts as a potential inhibitor of pocket protein-mediated cellular processes during development by regulating the activity of RB proteins during cell division and proliferation. May play a regulatory or permissive role in the normal embryonic cardiomyocyte cell cycle and in promoting continued mitosis in transformed, abnormally dividing neonatal cardiomyocytes. Interaction with RB directs embryonic stem cells toward a cardiac lineage. Involved in the regulation of DNA synthesis and hence cell cycle progression, via its C-terminus. Has a potential role regulating skeletal myogenesis and in cell differentiation in embryogenesis. Involved in dendritic cell regulation of T-cell immunity against chlamydia. This Homo sapiens (Human) protein is Centromere protein F (CENPF).